A 399-amino-acid chain; its full sequence is Telomeric repeat-binding factor 2-interacting protein 1 (399 aa).

A2 bears the N-acetylalanine mark. A phosphoserine mark is found at S36 and S43. One can recognise a BRCT domain in the interval 78-101 (FISTQYILDCVERNERLELEAYRL). The tract at residues 104 to 132 (ASAADTGSEAKPGALAEGAAEPEPQRHAG) is disordered. A compositionally biased stretch (low complexity) spans 112–125 (EAKPGALAEGAAEP). K114 participates in a covalent cross-link: Glycyl lysine isopeptide (Lys-Gly) (interchain with G-Cter in SUMO2). The 61-residue stretch at 128-188 (QRHAGRIAFT…SLKDRYLKHL (61 aa)) folds into the Myb-like domain. A phosphoserine mark is found at S154 and S156. A Glycyl lysine isopeptide (Lys-Gly) (interchain with G-Cter in SUMO2) cross-link involves residue K194. 2 disordered regions span residues 196 to 244 (LLGD…EEIQ) and 264 to 311 (VVVD…QPEV). Residues S203 and S206 each carry the phosphoserine modification. Residues K208, K212, and K240 each participate in a glycyl lysine isopeptide (Lys-Gly) (interchain with G-Cter in SUMO2) cross-link. Residues 280–304 (CDDDPPTPEEDSETQPDEEEEEEEE) show a composition bias toward acidic residues. Residue K372 forms a Glycyl lysine isopeptide (Lys-Gly) (interchain with G-Cter in SUMO2) linkage. The Nuclear localization signal signature appears at 383–399 (KKFGAQNVARRIEFRKK).

It belongs to the RAP1 family. In terms of assembly, associates with the I-kappa-B-kinase (IKK) core complex, composed of CHUK, IKBKB and IKBKG. Homodimer. Component of the shelterin complex (telosome) composed of TERF1, TERF2, TINF2, TERF2IP ACD and POT1. Interacts with TERF2; the interaction is direct. Does not interact with TERF1. Interacts with SLX4/BTBD12. In terms of tissue distribution, ubiquitous. Highly expressed.

Its subcellular location is the nucleus. The protein localises to the cytoplasm. It localises to the chromosome. It is found in the telomere. Functionally, acts both as a regulator of telomere function and as a transcription regulator. Involved in the regulation of telomere length and protection as a component of the shelterin complex (telosome). In contrast to other components of the shelterin complex, it is dispensible for telomere capping and does not participate in the protection of telomeres against non-homologous end-joining (NHEJ)-mediated repair. Instead, it is required to negatively regulate telomere recombination and is essential for repressing homology-directed repair (HDR), which can affect telomere length. Does not bind DNA directly: recruited to telomeric double-stranded 5'-TTAGGG-3' repeats via its interaction with TERF2. Independently of its function in telomeres, also acts as a transcription regulator: recruited to extratelomeric 5'-TTAGGG-3' sites via its association with TERF2 or other factors, and regulates gene expression. When cytoplasmic, associates with the I-kappa-B-kinase (IKK) complex and acts as a regulator of the NF-kappa-B signaling by promoting IKK-mediated phosphorylation of RELA/p65, leading to activate expression of NF-kappa-B target genes. The chain is Telomeric repeat-binding factor 2-interacting protein 1 (TERF2IP) from Homo sapiens (Human).